A 313-amino-acid chain; its full sequence is Carbamate kinase 2 (313 aa).

It belongs to the carbamate kinase family.

The protein resides in the cytoplasm. It catalyses the reaction hydrogencarbonate + NH4(+) + ATP = carbamoyl phosphate + ADP + H2O + H(+). It participates in metabolic intermediate metabolism; carbamoyl phosphate degradation; CO(2) and NH(3) from carbamoyl phosphate: step 1/1. The protein is Carbamate kinase 2 (arcC2) of Staphylococcus aureus (strain bovine RF122 / ET3-1).